The following is an 81-amino-acid chain: Photosystem I iron-sulfur center (81 aa).

4Fe-4S ferredoxin-type domains follow at residues 2–31 and 39–68; these read SHSV…MIPW and IASA…VRVY. Residues Cys-11, Cys-14, Cys-17, Cys-21, Cys-48, Cys-51, Cys-54, and Cys-58 each coordinate [4Fe-4S] cluster.

The eukaryotic PSI reaction center is composed of at least 11 subunits. [4Fe-4S] cluster serves as cofactor.

It is found in the plastid. The protein resides in the chloroplast thylakoid membrane. The catalysed reaction is reduced [plastocyanin] + hnu + oxidized [2Fe-2S]-[ferredoxin] = oxidized [plastocyanin] + reduced [2Fe-2S]-[ferredoxin]. Apoprotein for the two 4Fe-4S centers FA and FB of photosystem I (PSI); essential for photochemical activity. FB is the terminal electron acceptor of PSI, donating electrons to ferredoxin. The C-terminus interacts with PsaA/B/D and helps assemble the protein into the PSI complex. Required for binding of PsaD and PsaE to PSI. PSI is a plastocyanin-ferredoxin oxidoreductase, converting photonic excitation into a charge separation, which transfers an electron from the donor P700 chlorophyll pair to the spectroscopically characterized acceptors A0, A1, FX, FA and FB in turn. The protein is Photosystem I iron-sulfur center of Spinacia oleracea (Spinach).